A 617-amino-acid polypeptide reads, in one-letter code: KIF-binding protein (617 aa).

The disordered stretch occupies residues 48–83 (ALLGPAPEDDDERAADDGPVDQALGAGEPRDAEGPG). S174 carries the phosphoserine modification.

The protein belongs to the KIF-binding protein family. Interacts with KIF1B; positively regulates KIF1B microtubule motor activity. Interacts with STMN2.

It is found in the cytoplasm. The protein localises to the cytoskeleton. Its function is as follows. Activator of KIF1B plus-end-directed microtubule motor activity. Required for organization of axonal microtubules, and axonal outgrowth and maintenance during peripheral and central nervous system development. This chain is KIF-binding protein (Kifbp), found in Rattus norvegicus (Rat).